The chain runs to 180 residues: D-glycero-beta-D-manno-heptose-1,7-bisphosphate 7-phosphatase (180 aa).

D14 acts as the Nucleophile in catalysis. 2 residues coordinate Mg(2+): D14 and D16. Substrate-binding positions include D14–D16, N22–Y25, and T56–S59. The active-site Proton donor is D16. Positions 95, 97, 110, and 112 each coordinate Zn(2+). R113–K114 is a substrate binding site. A Mg(2+)-binding site is contributed by D139.

Belongs to the gmhB family. As to quaternary structure, monomer. Requires Mg(2+) as cofactor.

It localises to the cytoplasm. It catalyses the reaction D-glycero-beta-D-manno-heptose 1,7-bisphosphate + H2O = D-glycero-beta-D-manno-heptose 1-phosphate + phosphate. It functions in the pathway nucleotide-sugar biosynthesis; ADP-L-glycero-beta-D-manno-heptose biosynthesis; ADP-L-glycero-beta-D-manno-heptose from D-glycero-beta-D-manno-heptose 7-phosphate: step 2/4. It participates in bacterial outer membrane biogenesis; LPS core biosynthesis. Converts the D-glycero-beta-D-manno-heptose 1,7-bisphosphate (beta-HBP) intermediate into D-glycero-beta-D-manno-heptose 1-phosphate by removing the phosphate group at the C-7 position. Also catalyzes the dephosphorylation of D-glycero-alpha-D-manno-heptose 1,7-bisphosphate in vitro. The polypeptide is D-glycero-beta-D-manno-heptose-1,7-bisphosphate 7-phosphatase (Rhodopseudomonas palustris (strain ATCC BAA-98 / CGA009)).